The following is a 351-amino-acid chain: Inhibin beta C chain (351 aa).

Residues Met-1–Val-18 form the signal peptide. A propeptide spanning residues Asn-19–Gly-236 is cleaved from the precursor. Asn-110, Asn-142, and Asn-160 each carry an N-linked (GlcNAc...) asparagine glycan. 4 disulfides stabilise this stretch: Cys-239-Cys-247, Cys-246-Cys-316, Cys-275-Cys-348, and Cys-279-Cys-350.

This sequence belongs to the TGF-beta family. Homodimeric or heterodimeric through association with alpha and beta subunits, linked by one or more disulfide bonds. Inhibins are heterodimers of one alpha and one beta subunit. Activins are homo- or heterodimers of beta subunits only.

It localises to the secreted. In terms of biological role, inhibins and activins inhibit and activate, respectively, the secretion of follitropin by the pituitary gland. Inhibins/activins are involved in regulating a number of diverse functions such as hypothalamic and pituitary hormone secretion, gonadal hormone secretion, germ cell development and maturation, erythroid differentiation, insulin secretion, nerve cell survival, embryonic axial development or bone growth, depending on their subunit composition. Inhibins appear to oppose the functions of activins. In Rattus norvegicus (Rat), this protein is Inhibin beta C chain (Inhbc).